We begin with the raw amino-acid sequence, 289 residues long: Transcriptional regulator Rob (289 aa).

The 99-residue stretch at 8 to 106 folds into the HTH araC/xylS-type domain; that stretch reads RDLLIWLEGH…SQTPALYRRS (99 aa). 2 consecutive DNA-binding regions (H-T-H motif) follow at residues 25 to 46 and 73 to 96; these read DNVAAKAGYSKWHLQRMFKDVT and ILDIALQYRFDSQQTFTRAFKKQF.

Functionally, transcriptional regulator. Represses transcription of genes belonging to the flagellar regulon, including flhD, flhB and fliC; probably thereby leading to repression of motility. Binds to regulatory regions of target genes, including the promoters of the flhDC operon and of P-type ATPase mgtA. Involved in post-transcriptional regulation of expression. Represses expression of the flhDC operon in a post-transcriptional manner. Binds to the right arm of the replication origin oriC of the chromosome. Rob binding may influence the formation of the nucleoprotein structure, required for oriC function in the initiation of replication. The chain is Transcriptional regulator Rob from Salmonella typhimurium (strain LT2 / SGSC1412 / ATCC 700720).